The sequence spans 396 residues: tRNA-specific 2-thiouridylase MnmA (396 aa).

ATP is bound by residues 35–42 (GLSGGVDS) and Leu-61. Cys-122 (nucleophile) is an active-site residue. A disulfide bridge links Cys-122 with Cys-221. Gly-147 provides a ligand contact to ATP. The tract at residues 171-173 (KDQ) is interaction with tRNA. Cys-221 serves as the catalytic Cysteine persulfide intermediate. The tract at residues 326 to 327 (RY) is interaction with tRNA.

Belongs to the MnmA/TRMU family.

It localises to the cytoplasm. The enzyme catalyses S-sulfanyl-L-cysteinyl-[protein] + uridine(34) in tRNA + AH2 + ATP = 2-thiouridine(34) in tRNA + L-cysteinyl-[protein] + A + AMP + diphosphate + H(+). Catalyzes the 2-thiolation of uridine at the wobble position (U34) of tRNA, leading to the formation of s(2)U34. This chain is tRNA-specific 2-thiouridylase MnmA, found in Parasynechococcus marenigrum (strain WH8102).